A 357-amino-acid chain; its full sequence is Chorismate synthase (357 aa).

The segment covering E38–K49 has biased composition (basic and acidic residues). The tract at residues E38–R60 is disordered. R48 and R54 together coordinate NADP(+). FMN contacts are provided by residues R125–S127, N243–A244, G283, K298–S302, and R324.

This sequence belongs to the chorismate synthase family. As to quaternary structure, homotetramer. FMNH2 serves as cofactor.

It catalyses the reaction 5-O-(1-carboxyvinyl)-3-phosphoshikimate = chorismate + phosphate. The protein operates within metabolic intermediate biosynthesis; chorismate biosynthesis; chorismate from D-erythrose 4-phosphate and phosphoenolpyruvate: step 7/7. In terms of biological role, catalyzes the anti-1,4-elimination of the C-3 phosphate and the C-6 proR hydrogen from 5-enolpyruvylshikimate-3-phosphate (EPSP) to yield chorismate, which is the branch point compound that serves as the starting substrate for the three terminal pathways of aromatic amino acid biosynthesis. This reaction introduces a second double bond into the aromatic ring system. This Haemophilus influenzae (strain PittGG) protein is Chorismate synthase.